The sequence spans 312 residues: MKKIQLNSIASSCSLSGQRLDLVLSKLFREYSRSYLKKLIIMNQVLVNESIVNQPDKKILGGETLTIHPFSKDLLVDIPENIFLDIVYEDSDILIINKPAGLVVHPGSGNKSGTILNALLYHYKNSKDLPRAGIVHRLDKDTSGLMVIAKNIFSYNHLLLLLKEKKIIREYEGIVHGKMIAGGTINKPIMRHYNRRTCMMVHHLGKPSVTHYKVLSRFKFHTHIAIRLETGRTHQIRVHMLHIKYPLVGDPCYSGFKIQSNYRKDKKTNKIYKFPRQALHANHLSLHHPIKKNVMSWTVPLPQDIQELLLKI.

Residues 18–87 (QRLDLVLSKL…IPENIFLDIV (70 aa)) enclose the S4 RNA-binding domain. The active site involves aspartate 139.

The protein belongs to the pseudouridine synthase RluA family.

The protein localises to the cytoplasm. It carries out the reaction uridine(1911/1915/1917) in 23S rRNA = pseudouridine(1911/1915/1917) in 23S rRNA. In terms of biological role, responsible for synthesis of pseudouridine from uracil at positions 1911, 1915 and 1917 in 23S ribosomal RNA. This Buchnera aphidicola subsp. Acyrthosiphon pisum (strain APS) (Acyrthosiphon pisum symbiotic bacterium) protein is Ribosomal large subunit pseudouridine synthase D (rluD).